A 116-amino-acid polypeptide reads, in one-letter code: Large ribosomal subunit protein uL18 (116 aa).

This sequence belongs to the universal ribosomal protein uL18 family. As to quaternary structure, part of the 50S ribosomal subunit; part of the 5S rRNA/L5/L18/L25 subcomplex. Contacts the 5S and 23S rRNAs.

Functionally, this is one of the proteins that bind and probably mediate the attachment of the 5S RNA into the large ribosomal subunit, where it forms part of the central protuberance. The polypeptide is Large ribosomal subunit protein uL18 (Shewanella piezotolerans (strain WP3 / JCM 13877)).